The following is a 307-amino-acid chain: NADH-ubiquinone oxidoreductase chain 2 (307 aa).

10 helical membrane passes run 1–21 (MTLQSVLLGAMIILGPILSMT), 25–45 (WIIIWIGLEISLLGFVSYYML), 58–78 (YFLIQSVSSTVMLLNGLYIFV), 88–108 (FIFITMLMLKIGMFPLHFWII), 119–139 (IGIVGLLLKIVPMWILMHMGC), 144–164 (MLNLITMLSVTSMLFGALIGM), 193–213 (LFKYFITYGFSLVILLVFLYL), 217–237 (MSISLSLLSLSGLPPFMLFIG), 250–270 (LWFIVLVFAILSAVISLVYYL), and 287–307 (HYKMAMFLLVNVTFGMLLFLT).

Belongs to the complex I subunit 2 family.

It is found in the mitochondrion inner membrane. It carries out the reaction a ubiquinone + NADH + 5 H(+)(in) = a ubiquinol + NAD(+) + 4 H(+)(out). Core subunit of the mitochondrial membrane respiratory chain NADH dehydrogenase (Complex I) that is believed to belong to the minimal assembly required for catalysis. Complex I functions in the transfer of electrons from NADH to the respiratory chain. The immediate electron acceptor for the enzyme is believed to be ubiquinone. In Albinaria caerulea (Land snail), this protein is NADH-ubiquinone oxidoreductase chain 2 (ND2).